The primary structure comprises 155 residues: Ribosomal RNA large subunit methyltransferase H (155 aa).

S-adenosyl-L-methionine contacts are provided by residues L73, G104, and 123–128 (LSPLTL).

This sequence belongs to the RNA methyltransferase RlmH family. In terms of assembly, homodimer.

Its subcellular location is the cytoplasm. The catalysed reaction is pseudouridine(1915) in 23S rRNA + S-adenosyl-L-methionine = N(3)-methylpseudouridine(1915) in 23S rRNA + S-adenosyl-L-homocysteine + H(+). Its function is as follows. Specifically methylates the pseudouridine at position 1915 (m3Psi1915) in 23S rRNA. The chain is Ribosomal RNA large subunit methyltransferase H from Pseudomonas entomophila (strain L48).